A 329-amino-acid chain; its full sequence is MKMNLEKLGERIIEGGDILVEEALELANLRGSALYPLFGAASRIKEHFVGDKVFLCSIVNAKSGRCPENCSFCAQSAHHKTDAPVYSLIDEERMVACAREAEKNGSSCYGIITSGTSIKKGEELERICNAVRRIRRETGITPSCSLGIINHETASALVEAGVETYHHNLETSRSFFPNVCTTHDYEEDVNTVRVAKKAGLKVCCGGIFGLGESVAQRIEMAYTLRELDVDSVPLNFLNPIAGTKLENAENITPMECLQTIALFRLILPTKRISICGGREKNLRDLQSWIFFAGASGTMIGNYLTTTGRAAEEDWQMLKDLNLSVASCCE.

A Radical SAM core domain is found at 48–278 (FVGDKVFLCS…TKRISICGGR (231 aa)). [4Fe-4S] cluster contacts are provided by C66, C70, and C73. Residues S143 and C203 each coordinate [2Fe-2S] cluster.

Belongs to the radical SAM superfamily. Biotin synthase family. Homodimer. It depends on [4Fe-4S] cluster as a cofactor. [2Fe-2S] cluster serves as cofactor.

The catalysed reaction is (4R,5S)-dethiobiotin + (sulfur carrier)-SH + 2 reduced [2Fe-2S]-[ferredoxin] + 2 S-adenosyl-L-methionine = (sulfur carrier)-H + biotin + 2 5'-deoxyadenosine + 2 L-methionine + 2 oxidized [2Fe-2S]-[ferredoxin]. It functions in the pathway cofactor biosynthesis; biotin biosynthesis; biotin from 7,8-diaminononanoate: step 2/2. Catalyzes the conversion of dethiobiotin (DTB) to biotin by the insertion of a sulfur atom into dethiobiotin via a radical-based mechanism. The protein is Biotin synthase of Geotalea daltonii (strain DSM 22248 / JCM 15807 / FRC-32) (Geobacter daltonii).